The sequence spans 125 residues: Small ribosomal subunit protein uS12 (125 aa).

A disordered region spans residues 1-27 (MPTINQLVRKGREKGEQKSTAPALKSC). At Asp-89 the chain carries 3-methylthioaspartic acid. Residues 103-125 (DASGVQKRNQGRSKYGTKRPKKK) form a disordered region. Basic residues predominate over residues 111–125 (NQGRSKYGTKRPKKK).

Belongs to the universal ribosomal protein uS12 family. As to quaternary structure, part of the 30S ribosomal subunit. Contacts proteins S8 and S17. May interact with IF1 in the 30S initiation complex.

Its function is as follows. With S4 and S5 plays an important role in translational accuracy. In terms of biological role, interacts with and stabilizes bases of the 16S rRNA that are involved in tRNA selection in the A site and with the mRNA backbone. Located at the interface of the 30S and 50S subunits, it traverses the body of the 30S subunit contacting proteins on the other side and probably holding the rRNA structure together. The combined cluster of proteins S8, S12 and S17 appears to hold together the shoulder and platform of the 30S subunit. The sequence is that of Small ribosomal subunit protein uS12 from Syntrophomonas wolfei subsp. wolfei (strain DSM 2245B / Goettingen).